A 104-amino-acid chain; its full sequence is Large ribosomal subunit protein uL24 (104 aa).

This sequence belongs to the universal ribosomal protein uL24 family. Part of the 50S ribosomal subunit. In terms of processing, a methylated and unmethylated form are thought to exist.

Functionally, one of two assembly initiator proteins, it binds directly to the 5'-end of the 23S rRNA, where it nucleates assembly of the 50S subunit. In terms of biological role, one of the proteins that surrounds the polypeptide exit tunnel on the outside of the subunit. The sequence is that of Large ribosomal subunit protein uL24 from Rhodopseudomonas palustris (strain ATCC BAA-98 / CGA009).